We begin with the raw amino-acid sequence, 882 residues long: Translation initiation factor IF-2 (882 aa).

Disordered regions lie at residues 67-202 (KTVS…EKAR) and 223-278 (ERYG…KHMK). 2 stretches are compositionally biased toward basic and acidic residues: residues 95-152 (VKRD…EAKA) and 161-202 (EQPK…EKAR). Positions 251 to 264 (GRRNRNKTQTKSKR) are enriched in basic residues. Residues 265–274 (GGKDAREGRE) show a composition bias toward basic and acidic residues. Positions 382 to 551 (PRAPVVTIMG…LLQAEVLELK (170 aa)) constitute a tr-type G domain. Residues 391–398 (GHVDHGKT) are G1. 391-398 (GHVDHGKT) is a binding site for GTP. The segment at 416–420 (GITQH) is G2. Residues 437 to 440 (DTPG) form a G3 region. GTP is bound by residues 437–441 (DTPGH) and 491–494 (NKMD). The G4 stretch occupies residues 491 to 494 (NKMD). Residues 527–529 (SAK) are G5.

It belongs to the TRAFAC class translation factor GTPase superfamily. Classic translation factor GTPase family. IF-2 subfamily.

The protein localises to the cytoplasm. In terms of biological role, one of the essential components for the initiation of protein synthesis. Protects formylmethionyl-tRNA from spontaneous hydrolysis and promotes its binding to the 30S ribosomal subunits. Also involved in the hydrolysis of GTP during the formation of the 70S ribosomal complex. The polypeptide is Translation initiation factor IF-2 (Shewanella amazonensis (strain ATCC BAA-1098 / SB2B)).